The primary structure comprises 82 residues: RNA-binding protein Hfq (82 aa).

The region spanning 11-72 (DTFLNAVRKS…ISTIAPSAPV (62 aa)) is the Sm domain.

This sequence belongs to the Hfq family. In terms of assembly, homohexamer.

Its function is as follows. RNA chaperone that binds small regulatory RNA (sRNAs) and mRNAs to facilitate mRNA translational regulation in response to envelope stress, environmental stress and changes in metabolite concentrations. Also binds with high specificity to tRNAs. The chain is RNA-binding protein Hfq from Hyphomonas neptunium (strain ATCC 15444).